Here is a 611-residue protein sequence, read N- to C-terminus: ATP-dependent zinc metalloprotease FtsH 1 (611 aa).

Over 1–6 (MNDNNK) the chain is Cytoplasmic. Residues 7–27 (IIRSMVLYLLIFIAIYAMVQL) traverse the membrane as a helical segment. Residues 28 to 107 (YSQSTEPITD…KSEPQVGPPW (80 aa)) are Extracellular-facing. A helical transmembrane segment spans residues 108–128 (WVQMLPSLFLIVIFIIFWYIF). 124-131 (FWYIFMQQ) is an ATP binding site. Over 129 to 611 (MQQAQGGGGS…GEDIEGVQFA (483 aa)) the chain is Cytoplasmic. Position 423 (H423) interacts with Zn(2+). E424 is an active-site residue. 2 residues coordinate Zn(2+): H427 and D499.

It in the central section; belongs to the AAA ATPase family. The protein in the C-terminal section; belongs to the peptidase M41 family. Homohexamer. Requires Zn(2+) as cofactor.

It is found in the cell membrane. In terms of biological role, acts as a processive, ATP-dependent zinc metallopeptidase for both cytoplasmic and membrane proteins. Plays a role in the quality control of integral membrane proteins. The protein is ATP-dependent zinc metalloprotease FtsH 1 of Thermoanaerobacter sp. (strain X514).